Here is a 675-residue protein sequence, read N- to C-terminus: DNA ligase (675 aa).

NAD(+) contacts are provided by residues 36 to 40 (DAAYD), 85 to 86 (SL), and E117. Residue K119 is the N6-AMP-lysine intermediate of the active site. The NAD(+) site is built by R140, E177, K294, and K318. The Zn(2+) site is built by C412, C415, C430, and C436. Residues 597 to 675 (AEDLPLSGNT…EAEFLELIGE (79 aa)) form the BRCT domain.

This sequence belongs to the NAD-dependent DNA ligase family. LigA subfamily. Mg(2+) is required as a cofactor. Requires Mn(2+) as cofactor.

It catalyses the reaction NAD(+) + (deoxyribonucleotide)n-3'-hydroxyl + 5'-phospho-(deoxyribonucleotide)m = (deoxyribonucleotide)n+m + AMP + beta-nicotinamide D-nucleotide.. Its function is as follows. DNA ligase that catalyzes the formation of phosphodiester linkages between 5'-phosphoryl and 3'-hydroxyl groups in double-stranded DNA using NAD as a coenzyme and as the energy source for the reaction. It is essential for DNA replication and repair of damaged DNA. The polypeptide is DNA ligase (Thioalkalivibrio sulfidiphilus (strain HL-EbGR7)).